A 279-amino-acid chain; its full sequence is HTH-type transcriptional regulator HdfR (279 aa).

The region spanning methionine 1–threonine 58 is the HTH lysR-type domain. The H-T-H motif DNA-binding region spans phenylalanine 18 to arginine 37.

The protein belongs to the LysR transcriptional regulatory family.

Negatively regulates the transcription of the flagellar master operon flhDC by binding to the upstream region of the operon. This chain is HTH-type transcriptional regulator HdfR, found in Escherichia coli (strain SE11).